Here is a 549-residue protein sequence, read N- to C-terminus: Urocanate hydratase (549 aa).

NAD(+) contacts are provided by residues 46–47 (GG), Gln124, 170–172 (GMG), Glu190, Arg195, 236–237 (NA), 257–261 (QTSAH), 267–268 (YV), and Tyr316. Cys404 is an active-site residue. Gly486 contributes to the NAD(+) binding site.

Belongs to the urocanase family. Requires NAD(+) as cofactor.

Its subcellular location is the cytoplasm. The enzyme catalyses 4-imidazolone-5-propanoate = trans-urocanate + H2O. It functions in the pathway amino-acid degradation; L-histidine degradation into L-glutamate; N-formimidoyl-L-glutamate from L-histidine: step 2/3. Catalyzes the conversion of urocanate to 4-imidazolone-5-propionate. The sequence is that of Urocanate hydratase from Caldanaerobacter subterraneus subsp. tengcongensis (strain DSM 15242 / JCM 11007 / NBRC 100824 / MB4) (Thermoanaerobacter tengcongensis).